The primary structure comprises 66 residues: Potassium channel toxin alpha-KTx 30.3 (66 aa).

The signal sequence occupies residues 1–24 (MNKTFFLVVIMATVLVLAFDATDA). Disulfide bonds link cysteine 30–cysteine 50, cysteine 36–cysteine 55, and cysteine 40–cysteine 57.

This sequence belongs to the short scorpion toxin superfamily. Potassium channel inhibitor family. Alpha-KTx 30 subfamily. Expressed by the venom gland.

Its subcellular location is the secreted. Inhibits Kv1.3/KCNA3 channel. This chain is Potassium channel toxin alpha-KTx 30.3, found in Scorpiops jendeki (Scorpion).